The chain runs to 427 residues: Adenylosuccinate synthetase (427 aa).

Residues 12–18 (GDEGKGK) and 40–42 (GHT) contribute to the GTP site. Residue D13 is the Proton acceptor of the active site. Residues D13 and G40 each coordinate Mg(2+). IMP contacts are provided by residues 13 to 16 (DEGK), 38 to 41 (NAGH), T128, R142, Q223, T238, and R302. The active-site Proton donor is H41. Residue 298-304 (TTTGRAR) participates in substrate binding. Residues R304, 330 to 332 (KLD), and 412 to 414 (AVG) each bind GTP.

It belongs to the adenylosuccinate synthetase family. In terms of assembly, homodimer. It depends on Mg(2+) as a cofactor.

Its subcellular location is the cytoplasm. It carries out the reaction IMP + L-aspartate + GTP = N(6)-(1,2-dicarboxyethyl)-AMP + GDP + phosphate + 2 H(+). The protein operates within purine metabolism; AMP biosynthesis via de novo pathway; AMP from IMP: step 1/2. Functionally, plays an important role in the de novo pathway of purine nucleotide biosynthesis. Catalyzes the first committed step in the biosynthesis of AMP from IMP. This Desulfitobacterium hafniense (strain Y51) protein is Adenylosuccinate synthetase.